The following is a 580-amino-acid chain: E3 ubiquitin-protein ligase TRIM45 (580 aa).

The segment at 29 to 98 (CPLCMGLFKA…QIGILCPVCD (70 aa)) adopts an RING-type zinc-finger fold. 2 B box-type zinc fingers span residues 130-176 (GQGL…MVDL) and 186-227 (GKPI…CDFT). Cysteine 135, cysteine 138, cysteine 158, histidine 162, cysteine 191, histidine 194, cysteine 214, and histidine 219 together coordinate Zn(2+). Residues 281–335 (SEGYIKAIEEHRDKLLKQLEDIRVQKENSLQLQKAQLEQLLADMRTGVEFTEHLL) are a coiled coil. The stretch at 394-497 (TKEVDPAKCV…VQGSPFTVTV (104 aa)) is one Filamin repeat.

It belongs to the TRIM/RBCC family.

The protein resides in the cytoplasm. The protein localises to the nucleus. The catalysed reaction is S-ubiquitinyl-[E2 ubiquitin-conjugating enzyme]-L-cysteine + [acceptor protein]-L-lysine = [E2 ubiquitin-conjugating enzyme]-L-cysteine + N(6)-ubiquitinyl-[acceptor protein]-L-lysine.. In terms of biological role, E3 ubiquitin-protein ligase that plays a role in the regulation of inflammatory response. Mechanistically, mediates the 'Lys-48'-linked polyubiquitination of TAB2, a regulatory protein of the kinase TAK1, leading to its degradation via the proteasomal pathway and inhibition of the TLR-mediated inflammatory immune response. May act as a transcriptional repressor in mitogen-activated protein kinase signaling pathway. In Bos taurus (Bovine), this protein is E3 ubiquitin-protein ligase TRIM45 (TRIM45).